The following is a 371-amino-acid chain: Neuropeptide S receptor (371 aa).

The Extracellular portion of the chain corresponds to 1 to 52; the sequence is MPANLTEGSFHANQTVPMLDSSPVACTEIVTFTEALVAEEWGSFYSSFKTEQ. Residues N4 and N13 are each glycosylated (N-linked (GlcNAc...) asparagine). Residues 53 to 73 form a helical membrane-spanning segment; it reads LITLWVLFVVTIVGNSVVLFS. The Cytoplasmic segment spans residues 74 to 82; sequence TCRRKRKSR. The chain crosses the membrane as a helical span at residues 83 to 103; the sequence is MTFFVTQLAITDSFTGLINIL. The Extracellular segment spans residues 104–123; that stretch reads TDIIWRFTGDFMAPDLVCRV. A disulfide bond links C121 and C197. A helical membrane pass occupies residues 124–144; the sequence is VRYLQVVLLYASTYVLVSLSI. Residues 145–164 are Cytoplasmic-facing; it reads DRYHAIVYPMKFLQGEKQAK. Residues 165–185 form a helical membrane-spanning segment; that stretch reads VLIGIAWSLSFLFSIPTLIIF. At 186–212 the chain is on the extracellular side; sequence GKRTLSNGEVQCWALWPDDSYWTPYMT. A helical transmembrane segment spans residues 213-233; that stretch reads IVAFLVYFIPLAIISVIYGLV. Residues 234 to 275 are Cytoplasmic-facing; that stretch reads IRTIWMKSKTHETVISNCSDGKLCCSYNRGLISKAKIKAIKY. A helical membrane pass occupies residues 276–296; the sequence is SIVIILAFICCWSPYFLFDIL. The Extracellular segment spans residues 297–312; it reads DNFNVLPDTKERFYAS. A helical transmembrane segment spans residues 313–333; sequence VIIQNLPALNSAINPLIYCIF. Topologically, residues 334–371 are cytoplasmic; it reads SSSICSPCKMQRSQDSRMTYRERSERHEMQILSKPEFI.

It belongs to the G-protein coupled receptor 1 family. Vasopressin/oxytocin receptor subfamily.

The protein resides in the cell membrane. G-protein coupled receptor for neuropeptide S (NPS). Promotes mobilization of intracellular Ca(2+) stores. Inhibits cell growth in response to NPS binding. Involved in pathogenesis of asthma and other IgE-mediated diseases. This is Neuropeptide S receptor (Npsr1) from Mus musculus (Mouse).